The chain runs to 185 residues: Inner membrane lipoprotein DcrB (185 aa).

An N-terminal signal peptide occupies residues 1 to 19 (MRNLVKYVGIGLLVMGLAA). Cys20 carries N-palmitoyl cysteine lipidation. Residue Cys20 is the site of S-diacylglycerol cysteine attachment.

This sequence belongs to the DcrB family.

The protein localises to the cell membrane. Functionally, plays a role in cell envelope biogenesis, maintenance of cell envelope integrity and membrane homeostasis. Essential for lipoprotein maturation under conditions where membrane fluidity may be altered. This chain is Inner membrane lipoprotein DcrB, found in Shigella flexneri.